The sequence spans 736 residues: Transcription regulator protein BACH1 (736 aa).

A BTB domain is found at 34–100 (CDVTIFVEGQ…AYTAKLILSK (67 aa)). S196 carries the phosphoserine modification. A compositionally biased stretch (basic and acidic residues) spans 286-295 (MEPEETKKDP). Disordered regions lie at residues 286 to 312 (MEPE…FPHN) and 349 to 389 (KPLS…RSSV). Phosphoserine occurs at positions 364 and 445. A bZIP domain is found at 557-620 (CIHDIRRRSK…GETKQNLTGL (64 aa)). The tract at residues 562 to 578 (RRRSKNRIAAQRCRKRK) is basic motif. The leucine-zipper stretch occupies residues 582–589 (IQNLESEI). Positions 680–719 (LPPCARGNSEPGYARGQESQQMSTATSEQAGPAEQCRQSG) are disordered. A compositionally biased stretch (polar residues) spans 696–708 (QESQQMSTATSEQ).

Belongs to the bZIP family. CNC subfamily. In terms of assembly, heterodimer of BACH1 and MAFK. In terms of processing, ubiquitinated by the SCF(FBXL17) complex or by the by the SCF(FBXO22) complex, leading to its degradation by the proteasome. Under oxidative stress, reactive oxygen species covalently modify cysteine residues on the bZIP domain of BACH1 and release it from chromatin. If the BTB domain of BACH1 remains intact, its beta1-alpha6 degron is recognized by FBXO22, promoting its ubiquitination and degradation. If the structural integrity of the beta1-alpha6 degron is compromised, FBXL17 will transiently associate with the BACH1 BTB dimer and remodel it into stably bound monomer for ubiquitination and degradation.

Its subcellular location is the nucleus. Its function is as follows. Transcriptional regulator that acts as a repressor or activator, depending on the context. Binds to NF-E2 DNA binding sites. Plays important roles in coordinating transcription activation and repression by MAFK. Together with MAF, represses the transcription of genes under the control of the NFE2L2 oxidative stress pathway. In Homo sapiens (Human), this protein is Transcription regulator protein BACH1.